The sequence spans 355 residues: tRNA (guanine-N(1)-)-methyltransferase (355 aa).

Residues glycine 109 and 129–134 each bind S-adenosyl-L-methionine; that span reads IGDYVL.

Belongs to the RNA methyltransferase TrmD family. As to quaternary structure, homodimer.

It is found in the cytoplasm. The catalysed reaction is guanosine(37) in tRNA + S-adenosyl-L-methionine = N(1)-methylguanosine(37) in tRNA + S-adenosyl-L-homocysteine + H(+). Specifically methylates guanosine-37 in various tRNAs. This Chlamydia abortus (strain DSM 27085 / S26/3) (Chlamydophila abortus) protein is tRNA (guanine-N(1)-)-methyltransferase.